Consider the following 63-residue polypeptide: uncharacterized protein (63 aa).

An N-terminal signal peptide occupies residues 1–21 (MNRALILTFVLFFALFAISSA).

This is an uncharacterized protein from Dictyostelium discoideum (Social amoeba).